The primary structure comprises 489 residues: Cysteine--tRNA ligase (489 aa).

Cys-27 provides a ligand contact to Zn(2+). A 'HIGH' region motif is present at residues 29-39 (VTVYDLCHLGH). Zn(2+) contacts are provided by Cys-211, His-236, and Glu-240. Positions 268–272 (KMSKS) match the 'KMSKS' region motif. Lys-271 provides a ligand contact to ATP.

Belongs to the class-I aminoacyl-tRNA synthetase family. In terms of assembly, monomer. Zn(2+) is required as a cofactor.

It is found in the cytoplasm. The catalysed reaction is tRNA(Cys) + L-cysteine + ATP = L-cysteinyl-tRNA(Cys) + AMP + diphosphate. In Prochlorococcus marinus (strain AS9601), this protein is Cysteine--tRNA ligase.